Consider the following 131-residue polypeptide: Large ribosomal subunit protein eL14 (131 aa).

The protein belongs to the eukaryotic ribosomal protein eL14 family. As to quaternary structure, component of the large ribosomal subunit. Mature ribosomes consist of a small (40S) and a large (60S) subunit. The 40S subunit contains about 32 different proteins and 1 molecule of RNA (18S). The 60S subunit contains 45 different proteins and 3 molecules of RNA (25S, 5.8S and 5S).

It localises to the cytoplasm. Functionally, component of the ribosome, a large ribonucleoprotein complex responsible for the synthesis of proteins in the cell. The small ribosomal subunit (SSU) binds messenger RNAs (mRNAs) and translates the encoded message by selecting cognate aminoacyl-transfer RNA (tRNA) molecules. The large subunit (LSU) contains the ribosomal catalytic site termed the peptidyl transferase center (PTC), which catalyzes the formation of peptide bonds, thereby polymerizing the amino acids delivered by tRNAs into a polypeptide chain. The nascent polypeptides leave the ribosome through a tunnel in the LSU and interact with protein factors that function in enzymatic processing, targeting, and the membrane insertion of nascent chains at the exit of the ribosomal tunnel. The chain is Large ribosomal subunit protein eL14 from Candida albicans (strain SC5314 / ATCC MYA-2876) (Yeast).